A 378-amino-acid chain; its full sequence is Flagellar motor switch phosphatase FliY (378 aa).

The segment at 225–271 (ESAEEEETVQPEVTYEQPKEPVTPEPRIEPKQQQQPPKRQGTAKKAA) is disordered. A compositionally biased stretch (low complexity) spans 255-264 (KQQQQPPKRQ).

It belongs to the FliN/MopA/SpaO family.

Its subcellular location is the cell membrane. Functionally, component of the flagellar switch. Binds CheY-P and increases its hydrolysis rate in vitro. May function constitutively to remove CheY-P around the flagellar switch to maintain an optimal level of CheY-P whereas CheC may function after addition of an attractant to cope with increased levels of CheY-P. The polypeptide is Flagellar motor switch phosphatase FliY (fliY) (Bacillus subtilis (strain 168)).